Here is a 424-residue protein sequence, read N- to C-terminus: Proline--tRNA ligase (424 aa).

This sequence belongs to the class-II aminoacyl-tRNA synthetase family. ProS type 2 subfamily. Homodimer.

The protein localises to the cytoplasm. It carries out the reaction tRNA(Pro) + L-proline + ATP = L-prolyl-tRNA(Pro) + AMP + diphosphate. Catalyzes the attachment of proline to tRNA(Pro) in a two-step reaction: proline is first activated by ATP to form Pro-AMP and then transferred to the acceptor end of tRNA(Pro). This is Proline--tRNA ligase from Ehrlichia canis (strain Jake).